The chain runs to 534 residues: Peptide chain release factor 3 (534 aa).

Residues 9-278 (ARRRTFAIIS…FFIEHAPPPQ (270 aa)) form the tr-type G domain. GTP contacts are provided by residues 18 to 25 (SHPDAGKT), 86 to 90 (DTPGH), and 140 to 143 (NKLD).

The protein belongs to the TRAFAC class translation factor GTPase superfamily. Classic translation factor GTPase family. PrfC subfamily.

It is found in the cytoplasm. Functionally, increases the formation of ribosomal termination complexes and stimulates activities of RF-1 and RF-2. It binds guanine nucleotides and has strong preference for UGA stop codons. It may interact directly with the ribosome. The stimulation of RF-1 and RF-2 is significantly reduced by GTP and GDP, but not by GMP. The sequence is that of Peptide chain release factor 3 from Xanthomonas oryzae pv. oryzae (strain PXO99A).